The following is a 234-amino-acid chain: tRNA1(Val) (adenine(37)-N6)-methyltransferase (234 aa).

This sequence belongs to the methyltransferase superfamily. tRNA (adenine-N(6)-)-methyltransferase family.

The protein localises to the cytoplasm. The enzyme catalyses adenosine(37) in tRNA1(Val) + S-adenosyl-L-methionine = N(6)-methyladenosine(37) in tRNA1(Val) + S-adenosyl-L-homocysteine + H(+). Its function is as follows. Specifically methylates the adenine in position 37 of tRNA(1)(Val) (anticodon cmo5UAC). This is tRNA1(Val) (adenine(37)-N6)-methyltransferase from Aliivibrio fischeri (strain ATCC 700601 / ES114) (Vibrio fischeri).